The primary structure comprises 235 residues: Exosome complex component Rrp4 (235 aa).

Positions 67–139 constitute an S1 motif domain; the sequence is GDVVIGLIQS…KTRSPLLTVQ (73 aa). A KH domain is found at 149–205; it reads GKIVEISPAKVPRVIGRKMSMLKTLEEKTECKIFVARNGRIHLECPNEDLEAIAVMA.

The protein belongs to the RRP4 family. As to quaternary structure, component of the archaeal exosome complex. Forms a trimer of Rrp4 and/or Csl4 subunits. The trimer associates with a hexameric ring-like arrangement composed of 3 Rrp41-Rrp42 heterodimers.

It is found in the cytoplasm. Non-catalytic component of the exosome, which is a complex involved in RNA degradation. Increases the RNA binding and the efficiency of RNA degradation. Confers strong poly(A) specificity to the exosome. The polypeptide is Exosome complex component Rrp4 (Aeropyrum pernix (strain ATCC 700893 / DSM 11879 / JCM 9820 / NBRC 100138 / K1)).